The following is a 1293-amino-acid chain: Receptor-type tyrosine-protein phosphatase C (1293 aa).

Positions 1-25 (MTMGLWLKLLAFGFALLDTEVFVTG) are cleaved as a signal peptide. Over 26–566 (QTPTPSDELS…RNESTNFNAK (541 aa)) the chain is Extracellular. A disordered region spans residues 43-174 (LPQSDPLPAR…STTDISSGAS (132 aa)). Polar residues-rich tracts occupy residues 53 to 72 (TTES…SETT), 88 to 110 (QPDS…QADN), and 149 to 169 (LARN…TTDI). An N-linked (GlcNAc...) asparagine glycan is attached at N66. Residues N152, N163, N209, N213, N220, N255, N260, N292, N313, N324, N349, N418, N429, N459, and N491 are each glycosylated (N-linked (GlcNAc...) asparagine). Fibronectin type-III domains follow at residues 376–472 (IPET…TKAD) and 473–568 (RPDK…AKAL). A helical transmembrane segment spans residues 567 to 588 (ALIIFLVFLIIVTSIALLVVLY). At 589–1293 (KIYDLRKKRS…SASPAPTQSS (705 aa)) the chain is on the cytoplasmic side. Tyrosine-protein phosphatase domains are found at residues 642–901 (FLAE…LVEY) and 933–1216 (LEAE…IASI). Phosphotyrosine is present on Y672. Residues D810, 842-848 (CSAGVGR), and Q886 contribute to the substrate site. C842 acts as the Phosphocysteine intermediate in catalysis. Phosphoserine is present on residues S964, S983, S986, S990, S993, S994, and S998. The tract at residues 980–1003 (LEMSKESEPESDESSDDDSDSEET) is disordered. Residues 988-1001 (PESDESSDDDSDSE) are compositionally biased toward acidic residues. The active-site Phosphocysteine intermediate is C1157. Residue S1229 is modified to Phosphoserine. Residues 1240–1293 (DGGKQDANCVRPDGPLNKAQEDSRGVGTPEPTNSAEEPEHAANGSASPAPTQSS) form a disordered region. Residue T1267 is modified to Phosphothreonine. Residues 1283–1293 (GSASPAPTQSS) show a composition bias toward polar residues. S1286 is subject to Phosphoserine.

The protein belongs to the protein-tyrosine phosphatase family. Receptor class 1/6 subfamily. As to quaternary structure, interacts with SKAP1. Interacts with DPP4; the interaction is enhanced in an interleukin-12-dependent manner in activated lymphocytes. Binds GANAB and PRKCSH. Interacts with CD53; this interaction stabilizes PTPRC on the membrane and is required for optimal phosphatase activity. Interacts with CLEC10A. In terms of processing, heavily N- and O-glycosylated.

The protein resides in the cell membrane. It localises to the membrane raft. The protein localises to the synapse. The catalysed reaction is O-phospho-L-tyrosyl-[protein] + H2O = L-tyrosyl-[protein] + phosphate. Functionally, protein tyrosine-protein phosphatase required for T-cell activation through the antigen receptor. Acts as a positive regulator of T-cell coactivation upon binding to DPP4. The first PTPase domain has enzymatic activity, while the second one seems to affect the substrate specificity of the first one. Upon T-cell activation, recruits and dephosphorylates SKAP1 and FYN. Dephosphorylates LYN, and thereby modulates LYN activity. Interacts with CLEC10A at antigen presenting cell-T cell contact; CLEC10A on immature dendritic cells recognizes Tn antigen-carrying PTPRC/CD45 receptor on effector T cells and modulates T cell activation threshold to limit autoreactivity. The protein is Receptor-type tyrosine-protein phosphatase C of Mus musculus (Mouse).